The sequence spans 840 residues: Serotype-specific mannosyltransferase WbdA (840 aa).

Residues histidine 2 to glutamate 399 form an alpha-(1-&gt;2)-mannosyltransferase region. Residues lysine 456–lysine 829 are alpha-(1-&gt;3)-mannosyltransferase.

The protein belongs to the glycosyltransferase group 1 family. Glycosyltransferase 4 subfamily. Monomer. Interacts with the C-terminal region of WbdD. Interacts with WbdD via a surface-exposed alpha-helix in the C-terminal mannosyltransferase domain. However, the C-terminal domain is unable to interact with WbdD in the absence of its N-terminal partner.

It localises to the cell inner membrane. The catalysed reaction is [alpha-D-Man-(1-&gt;3)-alpha-D-Man-(1-&gt;3)-alpha-D-Man-(1-&gt;2)-alpha-D-Man-(1-&gt;2)](n)-alpha-D-Man-(1-&gt;3)-alpha-D-Man-(1-&gt;3)-alpha-D-Man-(1-&gt;3)-alpha-D-GlcNAc-di-trans,octa-cis-undecaprenyl diphosphate + 2 GDP-alpha-D-mannose = alpha-D-Man-(1-&gt;2)-alpha-D-Man-(1-&gt;2)-[alpha-D-Man-(1-&gt;3)-alpha-D-Man-(1-&gt;3)-alpha-D-Man-(1-&gt;2)-alpha-D-Man-(1-&gt;2)](n)-alpha-D-Man-(1-&gt;3)-alpha-D-Man-(1-&gt;3)-alpha-D-Man-(1-&gt;3)-alpha-D-GlcNAc-di-trans,octa-cis-undecaprenyl diphosphate + 2 GDP + 2 H(+). It catalyses the reaction alpha-D-Man-(1-&gt;2)-alpha-D-Man-(1-&gt;2)-[alpha-D-Man-(1-&gt;3)-alpha-D-Man-(1-&gt;3)-alpha-D-Man-(1-&gt;2)-alpha-D-Man-(1-&gt;2)](n)-alpha-D-Man-(1-&gt;3)-alpha-D-Man-(1-&gt;3)-alpha-D-Man-(1-&gt;3)-alpha-D-GlcNAc-di-trans,octa-cis-undecaprenyl diphosphate + 2 GDP-alpha-D-mannose = [alpha-D-Man-(1-&gt;3)-alpha-D-Man-(1-&gt;3)-alpha-D-Man-(1-&gt;2)-alpha-D-Man-(1-&gt;2)](n+1)-alpha-D-Man-(1-&gt;3)-alpha-D-Man-(1-&gt;3)-alpha-D-Man-(1-&gt;3)-alpha-D-GlcNAc-di-trans,octa-cis-undecaprenyl diphosphate + 2 GDP + 2 H(+). It functions in the pathway bacterial outer membrane biogenesis; LPS O-antigen biosynthesis. With respect to regulation, the alpha-(1-&gt;2)-mannosyltransferase activity of the N-terminal domain is regulated by the activity of the C-terminal alpha-(1-&gt;3)-mannosyltransferase. The relative concentration of WbdA and WbdD is critical in determining the O polysaccharide (OPS) modal chain length. OPS chain length increases with increasing concentration of WbdA, but the maximum length does not increase beyond the wild-type modal length, despite substantial increases in WbdA concentration. Mannosyltransferase involved in the biosynthesis of the repeat unit of the lipopolysaccharide (LPS) O-antigen region. Catalyzes the polymerization of a tetrasaccharide repeat unit containing two alpha-(1-&gt;3)- and two alpha-(1-&gt;2)-linked mannopyranose residues. Extension is terminated by the action of the chain terminator bifunctional methyltransferase/kinase WbdD. The polypeptide is Serotype-specific mannosyltransferase WbdA (Escherichia coli).